A 38-amino-acid chain; its full sequence is Photosystem II reaction center protein L (38 aa).

The helical transmembrane segment at 17-37 (SLYWGLLLIFVLAVLFSSYIF) threads the bilayer.

Belongs to the PsbL family. As to quaternary structure, PSII is composed of 1 copy each of membrane proteins PsbA, PsbB, PsbC, PsbD, PsbE, PsbF, PsbH, PsbI, PsbJ, PsbK, PsbL, PsbM, PsbT, PsbX, PsbY, PsbZ, Psb30/Ycf12, at least 3 peripheral proteins of the oxygen-evolving complex and a large number of cofactors. It forms dimeric complexes.

Its subcellular location is the plastid. It localises to the chloroplast thylakoid membrane. One of the components of the core complex of photosystem II (PSII). PSII is a light-driven water:plastoquinone oxidoreductase that uses light energy to abstract electrons from H(2)O, generating O(2) and a proton gradient subsequently used for ATP formation. It consists of a core antenna complex that captures photons, and an electron transfer chain that converts photonic excitation into a charge separation. This subunit is found at the monomer-monomer interface and is required for correct PSII assembly and/or dimerization. This is Photosystem II reaction center protein L from Oltmannsiellopsis viridis (Marine flagellate).